We begin with the raw amino-acid sequence, 462 residues long: MFWQFYKRGKEQGFWQPHQTIVVAVSGGVDSMALLTLMEQVAEKEQLQLVVAHVNHQLREASAQEAQYLATYCQQRELTYYETRWEDPEKQRNLEAKARTFRYEFFKEVMEIEGAAVLMTAHHLDDQAETILMKLIRGTNFSHSAGIKERRPFATGELIRPLLIYPKEELYQFAQRQAFVYFEDETNQTNEYLRNRLRNQVLPLLKQENPQFLDQIASFSNEQRFAQEFIQEQIEPQLSEAVEPTKQGWRIPLKRLLKETPAYQHFFLTAFFQKTLVPLGVSLNQRQMTQILKVLNDERQPQGSVMLEQQWQLAKSYDWLCLEQKQAALREEVTHLLVPGAGIYLSETEWLGLIATDKPFPLPEEINQWTGQLLAIPLTTATPLTVRHRQSGDRITLKPGFTKKLSRVFIDQKVPNEARESAWVITDEQEEIIWVPKFANSYLSIPLETDKIHYRLLFKTKE.

26–31 is an ATP binding site; it reads SGGVDS.

This sequence belongs to the tRNA(Ile)-lysidine synthase family.

Its subcellular location is the cytoplasm. The catalysed reaction is cytidine(34) in tRNA(Ile2) + L-lysine + ATP = lysidine(34) in tRNA(Ile2) + AMP + diphosphate + H(+). Its function is as follows. Ligates lysine onto the cytidine present at position 34 of the AUA codon-specific tRNA(Ile) that contains the anticodon CAU, in an ATP-dependent manner. Cytidine is converted to lysidine, thus changing the amino acid specificity of the tRNA from methionine to isoleucine. The chain is tRNA(Ile)-lysidine synthase from Enterococcus faecalis (strain ATCC 700802 / V583).